We begin with the raw amino-acid sequence, 794 residues long: MHVIKRDGGQEGVMFDKITSRIQKLCYGLNSDFVDPTQITMKVIQGLYSGVTTVELDTLAAETAATSTTKHPDYAILAARIAVSNLHKETKKVFSEVMEDLYNYVNPLNSRHSPMISKETLDIVLANKDRLNSAIIYDRDFSYNFFGFKTLERSYLLKINGKVAERPQHMLMRVSVGIHKEDIAAAIETYNLLSEKWFTHASPTLFNAGTNRPQLSSCFLLAMKDDSIEGIYDTLKQCALISKSAGGIGVAVSCIRATGRYIAGTNGNSNGLVPMLRVNNNTARYVDQGGNKRPGAFAMYLEPWHFDIFDFLELKKNTGKEEQRARDLFYALWIPDLFMKRVETNGDWSLMCPNDCPGLDECWGEEFEKLYAKYEQEGRAKRVVKAQQLWYAIIESQTETGTPYMLYKDACNRKSNRQNLGTIKCSNLCTEIVEYTSADEVAVCNLASIALNMYVTSERTFDFQKLASVTKVIVKNLNKIIDINYYPVKEAENSNKRHRPIGIGVQGLADAFILMRFPFESTEAQLLNTQIFETIYYAALESSCELAAEYGPYQTYAGCPVSKGILQYDMWEKTPTDLWDWAALKEKIANDGVRNSLLLAPMPTASTAQILGNNESIEPYTSNIYHRRVLSGEFQIVNPHLLKDLTERGLWNEEMKNQIIAQNGSIQTIPAIPDDLKELYKTVWEISQKTILKMAADRGAYIDQSQSLNIHIAEPNYGKLTSMHFYGWKQGLKTGMYYLRTKPGANPIQFTLNKEKLKETQKTTSSEDEETKERNKAAMVCSLENRHECLMCGS.

The region spanning 1–92 (MHVIKRDGGQ…VSNLHKETKK (92 aa)) is the ATP-cone domain. ATP-binding positions include 5–6 (KR), 11–17 (EGVMFDK), Thr53, and Asp57. GDP-binding residues include Ser202 and Ser217. Cys218 and Cys444 are oxidised to a cystine. DTTP-binding positions include 226 to 228 (DSI), Lys243, Arg256, and 263 to 264 (AG). Asn427 provides a ligand contact to GDP. Asn427 serves as the catalytic Proton acceptor. The active-site Cysteine radical intermediate is the Cys429. Residues Glu431 and 604 to 607 (TAST) each bind GDP. The Proton acceptor role is filled by Glu431.

Belongs to the ribonucleoside diphosphate reductase large chain family. As to quaternary structure, heterodimer of a large and a small subunit.

The protein localises to the cytoplasm. It carries out the reaction a 2'-deoxyribonucleoside 5'-diphosphate + [thioredoxin]-disulfide + H2O = a ribonucleoside 5'-diphosphate + [thioredoxin]-dithiol. Under complex allosteric control mediated by deoxynucleoside triphosphates and ATP binding to separate specificity and activation sites on the M1 subunit. The type of nucleotide bound at the specificity site determines substrate preference. It seems probable that ATP makes the enzyme reduce CDP and UDP, dGTP favors ADP reduction and dTTP favors GDP reduction. Stimulated by ATP and inhibited by dATP binding to the activity site. In terms of biological role, provides the precursors necessary for DNA synthesis. Catalyzes the biosynthesis of deoxyribonucleotides from the corresponding ribonucleotides. This chain is Ribonucleoside-diphosphate reductase large subunit (rrm1), found in Danio rerio (Zebrafish).